The primary structure comprises 457 residues: Multidrug resistance protein MdtK (457 aa).

Helical transmembrane passes span 11–31, 53–73, 93–113, 127–147, 159–179, 190–210, 249–269, 276–296, 313–333, 357–377, 387–407, and 417–437; these read LSALAVPVIIAQVSQTSMGVV, IWLPAILFGHGLLLALTPVVA, FLAAIISVLTMLVLYQGEYAI, AIGYLHALLWGVPGYLFYQVL, PGMMIGFIGLLINIPINYIFI, GVGCGVATASVYWIMMLLMML, LLFEVTLFAVVALLVLPLGVV, IALNFSSLMFVLPLSVGVATT, IAAHTGIMAGVALACCTAIFT, LMLLAAVYQISDAVQVIGTGV, IFYITFVAYWVLGLPSGYLLA, and GPAGFWCGFIIGLTAAAVMMV.

Belongs to the multi antimicrobial extrusion (MATE) (TC 2.A.66.1) family. MdtK subfamily.

Its subcellular location is the cell inner membrane. Its function is as follows. Multidrug efflux pump that functions probably as a Na(+)/drug antiporter. This chain is Multidrug resistance protein MdtK, found in Pectobacterium atrosepticum (strain SCRI 1043 / ATCC BAA-672) (Erwinia carotovora subsp. atroseptica).